The following is a 105-amino-acid chain: Cell division topological specificity factor (105 aa).

This sequence belongs to the MinE family.

Prevents the cell division inhibition by proteins MinC and MinD at internal division sites while permitting inhibition at polar sites. This ensures cell division at the proper site by restricting the formation of a division septum at the midpoint of the long axis of the cell. The chain is Cell division topological specificity factor from Prochlorococcus marinus (strain MIT 9515).